Consider the following 512-residue polypeptide: NAD-dependent deacetylase sir2A (512 aa).

A UBP-type zinc finger spans residues 7-110; it reads IECIHLKDEY…EILENIKSSN (104 aa). The Zn(2+) site is built by Cys-9, His-11, Cys-34, Cys-37, Cys-46, Cys-49, Cys-54, His-61, His-65, His-71, Cys-84, and Cys-87. Residues 113–122 are compositionally biased toward basic and acidic residues; it reads DKIVPKKDQK. Positions 113-196 are disordered; sequence DKIVPKKDQK…DESSSEGEES (84 aa). The segment covering 130 to 175 has biased composition (low complexity); the sequence is VVPSASITTSSTTTSISKQTTVNNTTTTSSSSTTTTTTTTSTTINN. Acidic residues predominate over residues 176-195; sequence NEEEEESESETDESSSEGEE. The region spanning 231–503 is the Deacetylase sirtuin-type domain; it reads CVLKKPTIEE…LDLIKLLGWE (273 aa). His-361 (proton acceptor) is an active-site residue. Zn(2+) is bound by residues Cys-369, Cys-372, Cys-393, and Cys-399.

Belongs to the sirtuin family. Zn(2+) is required as a cofactor.

It catalyses the reaction N(6)-acetyl-L-lysyl-[protein] + NAD(+) + H2O = 2''-O-acetyl-ADP-D-ribose + nicotinamide + L-lysyl-[protein]. Functionally, NAD-dependent deacetylase, which plays an important role in the regulation of transcriptional repression. The polypeptide is NAD-dependent deacetylase sir2A (sir2A) (Dictyostelium discoideum (Social amoeba)).